Here is a 155-residue protein sequence, read N- to C-terminus: uncharacterized protein (155 aa).

The N-acetyltransferase domain occupies 6 to 155 (TCVRNARLAD…CDEIAMVKTL (150 aa)).

The protein belongs to the acetyltransferase family.

This is an uncharacterized protein from Chlorobaculum tepidum (strain ATCC 49652 / DSM 12025 / NBRC 103806 / TLS) (Chlorobium tepidum).